A 161-amino-acid chain; its full sequence is FAD synthase (161 aa).

ATP-binding positions include 19-20 (TF), 24-27 (HPGH), Asp-106, and Tyr-133.

This sequence belongs to the archaeal FAD synthase family. As to quaternary structure, homodimer. A divalent metal cation is required as a cofactor.

The enzyme catalyses FMN + ATP + H(+) = FAD + diphosphate. Its pathway is cofactor biosynthesis; FAD biosynthesis; FAD from FMN: step 1/1. Functionally, catalyzes the transfer of the AMP portion of ATP to flavin mononucleotide (FMN) to produce flavin adenine dinucleotide (FAD) coenzyme. In Methanothermobacter marburgensis (strain ATCC BAA-927 / DSM 2133 / JCM 14651 / NBRC 100331 / OCM 82 / Marburg) (Methanobacterium thermoautotrophicum), this protein is FAD synthase.